Here is a 336-residue protein sequence, read N- to C-terminus: Glucan endo-1,3-beta-glucosidase A (336 aa).

The signal sequence occupies residues 1–23 (MAFLSSLLASLLLVGLLIQITGA). Gln-24 is modified (pyrrolidone carboxylic acid). Glu-118 acts as the Proton donor in catalysis. The active-site Nucleophile is the Glu-257.

It belongs to the glycosyl hydrolase 17 family.

It localises to the secreted. The protein resides in the extracellular space. The enzyme catalyses Hydrolysis of (1-&gt;3)-beta-D-glucosidic linkages in (1-&gt;3)-beta-D-glucans.. In terms of biological role, implicated in the defense of plants against pathogens. This Solanum lycopersicum (Tomato) protein is Glucan endo-1,3-beta-glucosidase A.